Here is a 316-residue protein sequence, read N- to C-terminus: Glycine--tRNA ligase alpha subunit (316 aa).

It belongs to the class-II aminoacyl-tRNA synthetase family. As to quaternary structure, tetramer of two alpha and two beta subunits.

Its subcellular location is the cytoplasm. The enzyme catalyses tRNA(Gly) + glycine + ATP = glycyl-tRNA(Gly) + AMP + diphosphate. The chain is Glycine--tRNA ligase alpha subunit from Cupriavidus taiwanensis (strain DSM 17343 / BCRC 17206 / CCUG 44338 / CIP 107171 / LMG 19424 / R1) (Ralstonia taiwanensis (strain LMG 19424)).